A 236-amino-acid polypeptide reads, in one-letter code: Protein EVI2A (236 aa).

The first 30 residues, 1–30 (MPTDMEHTGHYLHLAFLMTTVFSLSPGTKA), serve as a signal peptide directing secretion. Residues N31, N38, N49, N73, and N112 are each glycosylated (N-linked (GlcNAc...) asparagine). The Extracellular segment spans residues 31–133 (NYTRLWANST…DVCAENNNNM (103 aa)). Residues 134 to 154 (AMLICLIIIAVLFLICTFLFL) form a helical membrane-spanning segment. At 155-236 (STVVLANKVS…TEKLTNKQIG (82 aa)) the chain is on the cytoplasmic side. S211 bears the Phosphoserine mark. Residues 217–236 (ATRERKDEEGTEKLTNKQIG) form a disordered region. Residues 218–236 (TRERKDEEGTEKLTNKQIG) show a composition bias toward basic and acidic residues.

The protein belongs to the EVI2A family.

The protein localises to the membrane. May complex with itself or/and other proteins within the membrane, to function as part of a cell-surface receptor. In Homo sapiens (Human), this protein is Protein EVI2A (EVI2A).